Consider the following 180-residue polypeptide: Ribosome-recycling factor (180 aa).

It belongs to the RRF family.

It localises to the cytoplasm. Functionally, responsible for the release of ribosomes from messenger RNA at the termination of protein biosynthesis. May increase the efficiency of translation by recycling ribosomes from one round of translation to another. This is Ribosome-recycling factor from Chlamydia caviae (strain ATCC VR-813 / DSM 19441 / 03DC25 / GPIC) (Chlamydophila caviae).